We begin with the raw amino-acid sequence, 364 residues long: 3-isopropylmalate dehydrogenase (364 aa).

79 to 92 (GPKWEHLPAAEQPE) is a binding site for NAD(+). Substrate is bound by residues R100, R110, R139, and D228. Residues D228, D252, and D256 each contribute to the Mg(2+) site. Position 286-298 (286-298 (GSAPDIAGKDIAN)) interacts with NAD(+).

Belongs to the isocitrate and isopropylmalate dehydrogenases family. LeuB type 1 subfamily. As to quaternary structure, homodimer. Requires Mg(2+) as cofactor. Mn(2+) is required as a cofactor.

The protein resides in the cytoplasm. The enzyme catalyses (2R,3S)-3-isopropylmalate + NAD(+) = 4-methyl-2-oxopentanoate + CO2 + NADH. Its pathway is amino-acid biosynthesis; L-leucine biosynthesis; L-leucine from 3-methyl-2-oxobutanoate: step 3/4. Functionally, catalyzes the oxidation of 3-carboxy-2-hydroxy-4-methylpentanoate (3-isopropylmalate) to 3-carboxy-4-methyl-2-oxopentanoate. The product decarboxylates to 4-methyl-2 oxopentanoate. This Sodalis glossinidius (strain morsitans) protein is 3-isopropylmalate dehydrogenase.